The sequence spans 662 residues: Acetyl-coenzyme A synthetase (662 aa).

Residues 197-200 (RKGK) and Thr317 contribute to the CoA site. ATP-binding positions include 393 to 395 (GEP), 417 to 422 (DTWWQT), Asp510, and Arg525. Ser533 is a binding site for CoA. Residue Arg536 coordinates ATP. His549 and Val552 together coordinate Mg(2+). The residue at position 623 (Lys623) is an N6-acetyllysine.

This sequence belongs to the ATP-dependent AMP-binding enzyme family. Requires Mg(2+) as cofactor. Post-translationally, acetylated. Deacetylation by the SIR2-homolog deacetylase activates the enzyme.

The catalysed reaction is acetate + ATP + CoA = acetyl-CoA + AMP + diphosphate. Its function is as follows. Catalyzes the conversion of acetate into acetyl-CoA (AcCoA), an essential intermediate at the junction of anabolic and catabolic pathways. AcsA undergoes a two-step reaction. In the first half reaction, AcsA combines acetate with ATP to form acetyl-adenylate (AcAMP) intermediate. In the second half reaction, it can then transfer the acetyl group from AcAMP to the sulfhydryl group of CoA, forming the product AcCoA. The sequence is that of Acetyl-coenzyme A synthetase from Helicobacter acinonychis (strain Sheeba).